Consider the following 762-residue polypeptide: N,N-dimethylformamidase beta subunit (762 aa).

Heterotetramer of two DmfA1 (alpha) and two DmfA2 (beta) subunits.

It carries out the reaction N,N-dimethylformamide + H2O = dimethylamine + formate. Its function is as follows. Hydrolyzes N,N-dimethylformamide, and to a lesser extent N,N-dimethylacetamide and N,N-diethylacetamide. Has no activity against the substituted amides N-methylformamide, N-ethylformamide, N-ethylformamide and N-methylacetamide or the unsubstituted amides formamide, nicotinamide, acetoamide, benzamide, acetamide and acrylamide. In Paracoccus aminophilus, this protein is N,N-dimethylformamidase beta subunit.